The chain runs to 1031 residues: Serine-repeat antigen protein 6 (1031 aa).

An N-terminal signal peptide occupies residues 1–24 (MICPIFFLYIINVLFTQYFIKCEG). N74 carries an N-linked (GlcNAc...) asparagine glycan. The segment covering 91-101 (KVVSSSESGKG) has biased composition (low complexity). The segment at 91–163 (KVVSSSESGK…TESSSETLNK (73 aa)) is disordered. Residues 104–139 (VSHTKVTSEGLSDTQPNVTQSVSSSTHTPGSLDSTM) are compositionally biased toward polar residues. The N-linked (GlcNAc...) asparagine glycan is linked to N120. A compositionally biased stretch (low complexity) spans 140–158 (STEQHSSVSQSSLPTESSS). The N-linked (GlcNAc...) asparagine glycan is linked to N449. The disordered stretch occupies residues 490–567 (TLPSESPSES…GDTNYVYDFD (78 aa)). A compositionally biased stretch (low complexity) spans 492–505 (PSESPSESSSKSDS). The span at 511–535 (NDKDKNEDKDDMSKNSKEEFKNDDK) shows a compositional bias: basic and acidic residues. Residue N544 is glycosylated (N-linked (GlcNAc...) asparagine). Low complexity predominate over residues 554 to 564 (NINNGDTNYVY). Residue N573 is glycosylated (N-linked (GlcNAc...) asparagine). C644 is a catalytic residue. N674 carries an N-linked (GlcNAc...) asparagine glycan. Residues H810 and N835 contribute to the active site. 2 N-linked (GlcNAc...) asparagine glycosylation sites follow: N929 and N974.

This sequence belongs to the peptidase C1 family. Post-translationally, just prior to merozoite egress from host erythrocytes, proteolytically cleaved by SUB1 to generate the active 75kDa form.

It localises to the parasitophorous vacuole lumen. The protein localises to the parasitophorous vacuole membrane. Functionally, cysteine protease which plays an essential role in merozoite egress from host erythrocytes. May cleave host SPTB/beta spectrin and ANK1/ankyrin-1 which disrupts host erythrocyte actin cytoskeleton and leads to host erythrocyte cell membrane rupture. The sequence is that of Serine-repeat antigen protein 6 from Plasmodium falciparum (isolate 3D7).